Here is a 420-residue protein sequence, read N- to C-terminus: Coiled-coil domain-containing protein 85C (420 aa).

Position 2 is an N-acetylalanine (Ala-2). Coiled-coil stretches lie at residues 26 to 92 and 122 to 165; these read ELLR…RELC and HEVA…LAAA. The tract at residues 165-271 is disordered; that stretch reads AGGAGGGGGG…NGLHDPSSTY (107 aa). Gly residues predominate over residues 166–176; that stretch reads GGAGGGGGGAG. The residue at position 179 (Ser-179) is a Phosphoserine. The span at 185–212 shows a compositional bias: low complexity; the sequence is ASLSGPLAGSAAGSGARDVGDGSSTSSA. Ser-247 carries the phosphoserine modification.

The protein belongs to the CCDC85 family. In terms of assembly, may interact with ARVCF, CTNND1, CTNND2 and PKP4. As to expression, predominantly expressed on the surface of the lateral ventricular walls of the developing cerebral cortex.

The protein localises to the cell junction. It localises to the tight junction. The protein resides in the adherens junction. Its function is as follows. May play a role in cell-cell adhesion and epithelium development through its interaction with proteins of the beta-catenin family. May play an important role in cortical development, especially in the maintenance of radial glia. This chain is Coiled-coil domain-containing protein 85C (Ccdc85c), found in Mus musculus (Mouse).